The chain runs to 206 residues: Large ribosomal subunit protein uL4 (206 aa).

The tract at residues 42 to 93 is disordered; it reads KKQQGTHKTKNRSEVSRTGAKMYKQKGTGRARHHSARAPQFRGGGKAHGPVV. Residues 64–77 show a composition bias toward basic residues; sequence YKQKGTGRARHHSA.

This sequence belongs to the universal ribosomal protein uL4 family. In terms of assembly, part of the 50S ribosomal subunit.

Its function is as follows. One of the primary rRNA binding proteins, this protein initially binds near the 5'-end of the 23S rRNA. It is important during the early stages of 50S assembly. It makes multiple contacts with different domains of the 23S rRNA in the assembled 50S subunit and ribosome. Functionally, forms part of the polypeptide exit tunnel. The polypeptide is Large ribosomal subunit protein uL4 (Agrobacterium fabrum (strain C58 / ATCC 33970) (Agrobacterium tumefaciens (strain C58))).